The primary structure comprises 163 residues: Transcriptional repressor NrdR (163 aa).

The segment at 3 to 34 (CPFCRHDDSRVVDSRTTDDGSSIRRRRQCPNC) is a zinc-finger region. The ATP-cone domain occupies 46-136 (LSVIKRSGAP…VYQAFDSLAD (91 aa)).

Belongs to the NrdR family. The cofactor is Zn(2+).

Functionally, negatively regulates transcription of bacterial ribonucleotide reductase nrd genes and operons by binding to NrdR-boxes. The chain is Transcriptional repressor NrdR from Kineococcus radiotolerans (strain ATCC BAA-149 / DSM 14245 / SRS30216).